Here is a 541-residue protein sequence, read N- to C-terminus: Zinc finger protein 655 (541 aa).

The tract at residues 1–22 (MEEVTSQEAAESPRGHFQPLEN) is disordered. 6 C2H2-type zinc fingers span residues 243-265 (YKCD…QRIH), 271-293 (YKCK…KRIH), 334-356 (YKCG…QRTH), 361-383 (CKCT…QRLH), 411-433 (YSCN…QRIH), and 439-461 (HECN…HKMH). Residues 495-517 (FDCDAWEENFSQRAHLIQHERVH) form a C2H2-type 7; degenerate zinc finger.

The protein belongs to the krueppel C2H2-type zinc-finger protein family. As to quaternary structure, interacts with VAV1 and CDK4. Interacts with INTS13; promoting association with the integrator complex.

The protein localises to the nucleus. In terms of biological role, probable transcription factor. The sequence is that of Zinc finger protein 655 (Znf655) from Mus musculus (Mouse).